The following is a 224-amino-acid chain: Uracil-DNA glycosylase (224 aa).

Catalysis depends on D61, which acts as the Proton acceptor.

The protein belongs to the uracil-DNA glycosylase (UDG) superfamily. UNG family.

It localises to the cytoplasm. It carries out the reaction Hydrolyzes single-stranded DNA or mismatched double-stranded DNA and polynucleotides, releasing free uracil.. Functionally, excises uracil residues from the DNA which can arise as a result of misincorporation of dUMP residues by DNA polymerase or due to deamination of cytosine. In Mannheimia succiniciproducens (strain KCTC 0769BP / MBEL55E), this protein is Uracil-DNA glycosylase.